Here is a 316-residue protein sequence, read N- to C-terminus: Ribosomal RNA small subunit methyltransferase H (316 aa).

S-adenosyl-L-methionine is bound by residues 35-37 (SGH), aspartate 55, phenylalanine 84, aspartate 105, and glutamine 112.

It belongs to the methyltransferase superfamily. RsmH family.

It localises to the cytoplasm. The enzyme catalyses cytidine(1402) in 16S rRNA + S-adenosyl-L-methionine = N(4)-methylcytidine(1402) in 16S rRNA + S-adenosyl-L-homocysteine + H(+). Its function is as follows. Specifically methylates the N4 position of cytidine in position 1402 (C1402) of 16S rRNA. This Streptococcus equi subsp. zooepidemicus (strain MGCS10565) protein is Ribosomal RNA small subunit methyltransferase H.